A 117-amino-acid chain; its full sequence is UPF0295 protein GTNG_0491 (117 aa).

2 helical membrane-spanning segments follow: residues 12-32 (IRTFALSLIFVGVIVMYLGLF) and 42-62 (LFMVLGLLFLVASGIVYFWIG).

It belongs to the UPF0295 family.

The protein resides in the cell membrane. The polypeptide is UPF0295 protein GTNG_0491 (Geobacillus thermodenitrificans (strain NG80-2)).